The sequence spans 211 residues: Protein-L-isoaspartate O-methyltransferase (211 aa).

The active site involves serine 62.

This sequence belongs to the methyltransferase superfamily. L-isoaspartyl/D-aspartyl protein methyltransferase family.

The protein resides in the cytoplasm. The catalysed reaction is [protein]-L-isoaspartate + S-adenosyl-L-methionine = [protein]-L-isoaspartate alpha-methyl ester + S-adenosyl-L-homocysteine. In terms of biological role, catalyzes the methyl esterification of L-isoaspartyl residues in peptides and proteins that result from spontaneous decomposition of normal L-aspartyl and L-asparaginyl residues. It plays a role in the repair and/or degradation of damaged proteins. In Shewanella sp. (strain MR-4), this protein is Protein-L-isoaspartate O-methyltransferase.